A 465-amino-acid chain; its full sequence is Phenylalanine--tRNA ligase alpha subunit (465 aa).

2 residues coordinate L-phenylalanine: T311 and F389. E391 contacts Mg(2+).

This sequence belongs to the class-II aminoacyl-tRNA synthetase family. Phe-tRNA synthetase alpha subunit type 2 subfamily. As to quaternary structure, tetramer of two alpha and two beta subunits. Mg(2+) serves as cofactor.

Its subcellular location is the cytoplasm. It carries out the reaction tRNA(Phe) + L-phenylalanine + ATP = L-phenylalanyl-tRNA(Phe) + AMP + diphosphate + H(+). The protein is Phenylalanine--tRNA ligase alpha subunit of Metallosphaera sedula (strain ATCC 51363 / DSM 5348 / JCM 9185 / NBRC 15509 / TH2).